A 226-amino-acid polypeptide reads, in one-letter code: Large ribosomal subunit protein uL3 (226 aa).

The interval 136 to 162 is disordered; that stretch reads NFGSQRASHGNSRSHNVPGSISMAQDP. Residues 137–158 show a composition bias toward polar residues; sequence FGSQRASHGNSRSHNVPGSISM. An N5-methylglutamine modification is found at Gln160.

This sequence belongs to the universal ribosomal protein uL3 family. Part of the 50S ribosomal subunit. Forms a cluster with proteins L14 and L19. Post-translationally, methylated by PrmB.

Functionally, one of the primary rRNA binding proteins, it binds directly near the 3'-end of the 23S rRNA, where it nucleates assembly of the 50S subunit. The sequence is that of Large ribosomal subunit protein uL3 from Methylibium petroleiphilum (strain ATCC BAA-1232 / LMG 22953 / PM1).